A 270-amino-acid polypeptide reads, in one-letter code: tRNA (guanine-N(1)-)-methyltransferase (270 aa).

S-adenosyl-L-methionine contacts are provided by residues Gly119 and 139 to 144; that span reads IGDYVI.

It belongs to the RNA methyltransferase TrmD family. As to quaternary structure, homodimer.

It is found in the cytoplasm. It carries out the reaction guanosine(37) in tRNA + S-adenosyl-L-methionine = N(1)-methylguanosine(37) in tRNA + S-adenosyl-L-homocysteine + H(+). Its function is as follows. Specifically methylates guanosine-37 in various tRNAs. This Nitrosomonas europaea (strain ATCC 19718 / CIP 103999 / KCTC 2705 / NBRC 14298) protein is tRNA (guanine-N(1)-)-methyltransferase.